Consider the following 311-residue polypeptide: Avirulence protein ATR1 (311 aa).

Positions 1–15 are cleaved as a signal peptide; the sequence is MRVCYFVLVPSVALA. Positions 48–62 match the RxLR-dEER motif; sequence RALRAQTALDDDEER. WY domain regions lie at residues 127 to 209 and 210 to 311; these read DEAL…VKCV and ESED…IYSV.

Belongs to the RxLR effector family. In terms of assembly, monomer. Interacts with defense protein RPP1 from several ecotypes including RPP1-NdA, RPP1-WsB, RPP1-EstA and RPP1-ZdrA, via their leucine-rich repeats (LLRs).

It is found in the secreted. The protein localises to the host cytoplasm. Functionally, secreted effector that acts as an elicitor of hypersensitive response (HR) specifically on plants carrying both defense protein RPP1 from several ecotypes including RPP1-NdA, RPP1-WsB, RPP1-EstA and RPP1-ZdrA. This chain is Avirulence protein ATR1, found in Hyaloperonospora arabidopsidis (strain Emoy2) (Downy mildew agent).